The following is an 872-amino-acid chain: Probable LRR receptor-like serine/threonine-protein kinase At1g51880 (872 aa).

A signal peptide spans 1–23 (MKSIHGFLLFLITAYVILESVQA). The Extracellular portion of the chain corresponds to 24 to 513 (QDQLGFISLD…GKSKKVPMIP (490 aa)). N-linked (GlcNAc...) asparagine glycans are attached at residues asparagine 40, asparagine 49, asparagine 96, asparagine 181, asparagine 255, asparagine 268, asparagine 294, asparagine 339, and asparagine 401. LRR repeat units lie at residues 411–434 (RIIS…SKLT), 435–457 (QLIE…FADM), and 459–482 (LLKL…IQQR). N-linked (GlcNAc...) asparagine glycans are attached at residues asparagine 464 and asparagine 472. The helical transmembrane segment at 514-534 (IVASVAGVFALLVILAIFFVV) threads the bilayer. Over 535–872 (RRKNGESNKG…SASEFSPGAR (338 aa)) the chain is Cytoplasmic. Threonine 557 is subject to Phosphothreonine. The Protein kinase domain maps to 566 to 838 (NNFERVLGKG…HVVTELNECV (273 aa)). ATP is bound by residues 572–580 (LGKGGFGTV) and lysine 593. At tyrosine 638 the chain carries Phosphotyrosine. The active-site Proton acceptor is aspartate 690. Serine 724 is modified (phosphoserine). 2 positions are modified to phosphothreonine: threonine 725 and threonine 730. Tyrosine 738 carries the post-translational modification Phosphotyrosine.

It belongs to the protein kinase superfamily. Ser/Thr protein kinase family.

Its subcellular location is the membrane. It catalyses the reaction L-seryl-[protein] + ATP = O-phospho-L-seryl-[protein] + ADP + H(+). It carries out the reaction L-threonyl-[protein] + ATP = O-phospho-L-threonyl-[protein] + ADP + H(+). The chain is Probable LRR receptor-like serine/threonine-protein kinase At1g51880 from Arabidopsis thaliana (Mouse-ear cress).